The primary structure comprises 217 residues: Glycine betaine/carnitine/choline transport system permease protein OpuCB (217 aa).

The region spanning 19–198 (TGEHLYISLI…ILAIIIDYVL (180 aa)) is the ABC transmembrane type-1 domain. A run of 6 helical transmembrane segments spans residues 23–43 (LYIS…LGVA), 52–74 (GAVI…AFFI), 84–101 (AIVA…RNTY), 128–148 (LVEI…STIY), 150–170 (IGWA…YIFI), and 180–200 (IIGG…VLAV).

This sequence belongs to the binding-protein-dependent transport system permease family. CysTW subfamily. As to quaternary structure, the complex is composed of two ATP-binding proteins (OpuCA), two transmembrane proteins (OpuCB and OpuCD) and a solute-binding protein (OpuCC).

Its subcellular location is the cell membrane. Its function is as follows. Involved in a high affinity multicomponent binding-protein-dependent transport system for glycine betaine, carnitine and choline; probably responsible for the translocation of the substrate across the membrane. This is Glycine betaine/carnitine/choline transport system permease protein OpuCB (opuCB) from Bacillus subtilis (strain 168).